Consider the following 352-residue polypeptide: Protein RecA (352 aa).

65–72 (GPESSGKT) serves as a coordination point for ATP.

The protein belongs to the RecA family.

It localises to the cytoplasm. In terms of biological role, can catalyze the hydrolysis of ATP in the presence of single-stranded DNA, the ATP-dependent uptake of single-stranded DNA by duplex DNA, and the ATP-dependent hybridization of homologous single-stranded DNAs. It interacts with LexA causing its activation and leading to its autocatalytic cleavage. This chain is Protein RecA, found in Pseudomonas fluorescens (strain SBW25).